The primary structure comprises 218 residues: MNLLIMGLPGAGKGTQAAKIVEEFGVAHISTGDMFRAAMANQTEMGRLAKSFIDKGELVPDEVTNGIVKERLAESDIAEKGFLLDGYPRTIEQAHALDETLKALDIKLDGVINIEVNPESLVERLSGRFICRSCGSTYHKVFNPTKVEGTCDVCGGHEFFQREDDKPETVKRRLDVNIAQGEPIIAHYRELGLVSDIQGNQDIDDVFADVKKAIAAIK.

Position 10 to 15 (10 to 15) interacts with ATP; that stretch reads GAGKGT. The segment at 30–59 is NMP; it reads STGDMFRAAMANQTEMGRLAKSFIDKGELV. Residues T31, R36, 57–59, 86–89, and Q93 contribute to the AMP site; these read ELV and GYPR. Residues 127–165 are LID; the sequence is GRFICRSCGSTYHKVFNPTKVEGTCDVCGGHEFFQREDD. R128 provides a ligand contact to ATP. Residues C131 and C134 each contribute to the Zn(2+) site. Position 137 to 138 (137 to 138) interacts with ATP; that stretch reads TY. Zn(2+) contacts are provided by C151 and C154. 2 residues coordinate AMP: R162 and R173. Position 201 (Q201) interacts with ATP.

Belongs to the adenylate kinase family. In terms of assembly, monomer.

It localises to the cytoplasm. The enzyme catalyses AMP + ATP = 2 ADP. It participates in purine metabolism; AMP biosynthesis via salvage pathway; AMP from ADP: step 1/1. Functionally, catalyzes the reversible transfer of the terminal phosphate group between ATP and AMP. Plays an important role in cellular energy homeostasis and in adenine nucleotide metabolism. This is Adenylate kinase from Streptococcus thermophilus (strain CNRZ 1066).